The primary structure comprises 486 residues: ATP synthase subunit beta (486 aa).

Basic and acidic residues predominate over residues Met-1–Gly-12. The tract at residues Met-1 to Arg-22 is disordered. Gly-171–Thr-178 lines the ATP pocket.

It belongs to the ATPase alpha/beta chains family. In terms of assembly, F-type ATPases have 2 components, CF(1) - the catalytic core - and CF(0) - the membrane proton channel. CF(1) has five subunits: alpha(3), beta(3), gamma(1), delta(1), epsilon(1). CF(0) has three main subunits: a(1), b(2) and c(9-12). The alpha and beta chains form an alternating ring which encloses part of the gamma chain. CF(1) is attached to CF(0) by a central stalk formed by the gamma and epsilon chains, while a peripheral stalk is formed by the delta and b chains.

It is found in the cell membrane. The enzyme catalyses ATP + H2O + 4 H(+)(in) = ADP + phosphate + 5 H(+)(out). Its function is as follows. Produces ATP from ADP in the presence of a proton gradient across the membrane. The catalytic sites are hosted primarily by the beta subunits. In Mycobacterium tuberculosis (strain ATCC 25177 / H37Ra), this protein is ATP synthase subunit beta.